Consider the following 284-residue polypeptide: Interferon antagonist OPG039 (284 aa).

ANK repeat units lie at residues 29-58 (NGHSVLYYAIADNNVRLVCTLLNAGALKNL), 60-89 (DNEFPLHQAATLEDTKIVKILLFSGMDDSQ), 93-122 (KGNTALYYAVDSGNMQTVKLFVKKNWRLMF), 127-157 (GWKTSFYHAVMLNDVSIVSYFLSEIPSPFDL), 159-188 (ILLSCIHTTIKNGHVDMMILLLDYMTSTNT), and 192-221 (LFIPDIKLAIDNKDIEMLQALFKYDINIYS).

It belongs to the orthopoxvirus OPG039 family.

It localises to the host cytoplasm. The protein localises to the host nucleus. Functionally, inhibits antiviral activity induced by type I interferons. Does not block signal transduction of IFN, but is important to counter the host antiviral state induced by a pre-treatment with IFN. Plays a role in the inhibition of host NF-kappa-B activation by preventing the acetylation of the RELA/p65 subunit of NF-kappaB. The sequence is that of Interferon antagonist OPG039 (OPG039) from Cynomys gunnisoni (Gunnison's prairie dog).